We begin with the raw amino-acid sequence, 339 residues long: Erlin-2 (339 aa).

Residues 1 to 3 (MAQ) lie on the Cytoplasmic side of the membrane. Residues 4-24 (LGAVVAVASSFFCASLFSAVH) form a helical membrane-spanning segment. Residues 25–339 (KIEEGHIGVY…EPLETATKDN (315 aa)) are Extracellular-facing. Asparagine 106 carries an N-linked (GlcNAc...) asparagine glycan. Residues 177-309 (EAIRRNYELM…DIPNMFMDSA (133 aa)) are interaction with ERLIN1. Lysine 267 carries the N6-acetyllysine modification.

This sequence belongs to the band 7/mec-2 family. In terms of assembly, forms a heteromeric complex with ERLIN1. In complex with ERLIN1, interacts with RNF170. Interacts with activated ITPR1, independently of the degree of ITPR1 polyubiquitination. Interacts with SCAP, INSIG1, SREBF1 and SREBF2 under cholesterol sufficiency conditions; indicative for an association with the SCAP-SREBP-INSIG complex. Probably part of an AMFR/gp78 and INSIG1-containing ubiquitin ligase complex involved in ERAD of HMGCR. Interacts with TMUB1; TMUB1 bridges the association with AMFR. Interacts with SYVN1 and RNF139. Interacts with TMEM259. Interacts with TMEM41B. Post-translationally, deubiquitinated by USP25; leading to stabilization.

It localises to the endoplasmic reticulum membrane. Functionally, component of the ERLIN1/ERLIN2 complex which mediates the endoplasmic reticulum-associated degradation (ERAD) of inositol 1,4,5-trisphosphate receptors (IP3Rs) such as ITPR1. Promotes sterol-accelerated ERAD of HMGCR probably implicating an AMFR/gp78-containing ubiquitin ligase complex. Involved in regulation of cellular cholesterol homeostasis by regulation the SREBP signaling pathway. May promote ER retention of the SCAP-SREBF complex. The sequence is that of Erlin-2 from Rattus norvegicus (Rat).